Reading from the N-terminus, the 90-residue chain is RNA-binding protein Hfq (90 aa).

The 61-residue stretch at 10–70 (DGFLNLLRRE…LSTITPARPL (61 aa)) folds into the Sm domain.

It belongs to the Hfq family. Homohexamer.

Functionally, RNA chaperone that binds small regulatory RNA (sRNAs) and mRNAs to facilitate mRNA translational regulation in response to envelope stress, environmental stress and changes in metabolite concentrations. Also binds with high specificity to tRNAs. The polypeptide is RNA-binding protein Hfq (Symbiobacterium thermophilum (strain DSM 24528 / JCM 14929 / IAM 14863 / T)).